The following is a 554-amino-acid chain: 3-(3-hydroxy-phenyl)propionate/3-hydroxycinnamic acid hydroxylase (554 aa).

Residues 17-46 and 285-295 each bind FAD; these read QVAIAGAGPVGLMMANYLGQMGISVLLVEK and FRIDRVLLAGD.

The protein belongs to the PheA/TfdB FAD monooxygenase family. Requires FAD as cofactor.

It carries out the reaction 3-(3-hydroxyphenyl)propanoate + NADH + O2 + H(+) = 3-(2,3-dihydroxyphenyl)propanoate + NAD(+) + H2O. The enzyme catalyses (2E)-3-(3-hydroxyphenyl)prop-2-enoate + NADH + O2 + H(+) = (2E)-3-(2,3-dihydroxyphenyl)prop-2-enoate + NAD(+) + H2O. It functions in the pathway aromatic compound metabolism; 3-phenylpropanoate degradation. Its function is as follows. Catalyzes the insertion of one atom of molecular oxygen into position 2 of the phenyl ring of 3-(3-hydroxyphenyl)propionate (3-HPP) and hydroxycinnamic acid (3HCI). The protein is 3-(3-hydroxy-phenyl)propionate/3-hydroxycinnamic acid hydroxylase of Klebsiella pneumoniae (strain 342).